A 539-amino-acid polypeptide reads, in one-letter code: Membrane protein insertase YidC (539 aa).

Residues 6–26 (VILAVALSFAVLLGWQFLFPP) form a helical membrane-spanning segment. The interval 28-63 (PQQPAPAQQEQTAQPNQAVDSSVAGPVSNQLPDPAS) is disordered. The segment covering 32–45 (APAQQEQTAQPNQA) has biased composition (low complexity). Residues 54 to 63 (VSNQLPDPAS) show a composition bias toward polar residues. The next 3 helical transmembrane spans lie at 349–369 (YGIAIILLTIVIKILFWPLSH), 421–441 (MLLQIPVFFGLYKALMGTVAL), and 496–516 (IMMFLPLVFTFMFLNFPSGLV).

The protein belongs to the OXA1/ALB3/YidC family. Type 1 subfamily. In terms of assembly, interacts with the Sec translocase complex via SecD. Specifically interacts with transmembrane segments of nascent integral membrane proteins during membrane integration.

Its subcellular location is the cell inner membrane. Functionally, required for the insertion and/or proper folding and/or complex formation of integral membrane proteins into the membrane. Involved in integration of membrane proteins that insert both dependently and independently of the Sec translocase complex, as well as at least some lipoproteins. Aids folding of multispanning membrane proteins. The polypeptide is Membrane protein insertase YidC (Maridesulfovibrio salexigens (strain ATCC 14822 / DSM 2638 / NCIMB 8403 / VKM B-1763) (Desulfovibrio salexigens)).